The sequence spans 87 residues: Small ribosomal subunit protein uS17 (87 aa).

This sequence belongs to the universal ribosomal protein uS17 family. As to quaternary structure, part of the 30S ribosomal subunit.

Functionally, one of the primary rRNA binding proteins, it binds specifically to the 5'-end of 16S ribosomal RNA. In Staphylococcus carnosus (strain TM300), this protein is Small ribosomal subunit protein uS17.